We begin with the raw amino-acid sequence, 185 residues long: Elongation factor P (185 aa).

This sequence belongs to the elongation factor P family.

It is found in the cytoplasm. It functions in the pathway protein biosynthesis; polypeptide chain elongation. Its function is as follows. Involved in peptide bond synthesis. Stimulates efficient translation and peptide-bond synthesis on native or reconstituted 70S ribosomes in vitro. Probably functions indirectly by altering the affinity of the ribosome for aminoacyl-tRNA, thus increasing their reactivity as acceptors for peptidyl transferase. This Burkholderia cenocepacia (strain HI2424) protein is Elongation factor P.